The sequence spans 237 residues: Ribonuclease PH (237 aa).

Phosphate contacts are provided by residues Arg-86 and 124-126 (GTR).

Belongs to the RNase PH family. As to quaternary structure, homohexameric ring arranged as a trimer of dimers.

It catalyses the reaction tRNA(n+1) + phosphate = tRNA(n) + a ribonucleoside 5'-diphosphate. In terms of biological role, phosphorolytic 3'-5' exoribonuclease that plays an important role in tRNA 3'-end maturation. Removes nucleotide residues following the 3'-CCA terminus of tRNAs; can also add nucleotides to the ends of RNA molecules by using nucleoside diphosphates as substrates, but this may not be physiologically important. Probably plays a role in initiation of 16S rRNA degradation (leading to ribosome degradation) during starvation. This chain is Ribonuclease PH, found in Nitrobacter hamburgensis (strain DSM 10229 / NCIMB 13809 / X14).